Reading from the N-terminus, the 98-residue chain is Small ribosomal subunit protein uS17B (98 aa).

It belongs to the universal ribosomal protein uS17 family. In terms of assembly, part of the 30S ribosomal subunit.

Functionally, one of the primary rRNA binding proteins, it binds specifically to the 5'-end of 16S ribosomal RNA. This is Small ribosomal subunit protein uS17B from Bacteroides thetaiotaomicron (strain ATCC 29148 / DSM 2079 / JCM 5827 / CCUG 10774 / NCTC 10582 / VPI-5482 / E50).